A 262-amino-acid chain; its full sequence is Putative outer membrane protein CPn_1034/CP_0818/CPj1034/CpB1074 (262 aa).

The signal sequence occupies residues 1 to 17 (MKTWLFFTFLFSCSSFY).

It is found in the cell outer membrane. The polypeptide is Putative outer membrane protein CPn_1034/CP_0818/CPj1034/CpB1074 (Chlamydia pneumoniae (Chlamydophila pneumoniae)).